Reading from the N-terminus, the 544-residue chain is Chaperonin GroEL (544 aa).

Residues 30-33 (TLGP), lysine 51, 87-91 (DGTTT), glycine 415, 479-481 (NAA), and aspartate 495 each bind ATP.

Belongs to the chaperonin (HSP60) family. Forms a cylinder of 14 subunits composed of two heptameric rings stacked back-to-back. Interacts with the co-chaperonin GroES.

Its subcellular location is the cytoplasm. The catalysed reaction is ATP + H2O + a folded polypeptide = ADP + phosphate + an unfolded polypeptide.. Together with its co-chaperonin GroES, plays an essential role in assisting protein folding. The GroEL-GroES system forms a nano-cage that allows encapsulation of the non-native substrate proteins and provides a physical environment optimized to promote and accelerate protein folding. In Francisella tularensis subsp. novicida (strain U112), this protein is Chaperonin GroEL.